We begin with the raw amino-acid sequence, 448 residues long: Phosphoglucosamine mutase (448 aa).

The Phosphoserine intermediate role is filled by serine 100. The Mg(2+) site is built by serine 100, aspartate 240, aspartate 242, and aspartate 244. Position 100 is a phosphoserine (serine 100).

It belongs to the phosphohexose mutase family. The cofactor is Mg(2+). In terms of processing, activated by phosphorylation.

It carries out the reaction alpha-D-glucosamine 1-phosphate = D-glucosamine 6-phosphate. In terms of biological role, catalyzes the conversion of glucosamine-6-phosphate to glucosamine-1-phosphate. In Bacillus anthracis (strain A0248), this protein is Phosphoglucosamine mutase.